Consider the following 248-residue polypeptide: Triosephosphate isomerase (248 aa).

Residues Asn12 and Lys14 each contribute to the substrate site. An igE-binding region spans residues 16–30; it reads NGDRAGIDSIISFMK. His95 (electrophile) is an active-site residue. Glu165 (proton acceptor) is an active-site residue. IgE-binding regions lie at residues 166-180 and 205-219; these read PVWAIGTGKTATPEQ and RIIYGGSVTPGNCKE.

This sequence belongs to the triosephosphate isomerase family. In terms of assembly, homodimer. As to expression, expressed in skeletal muscle (at protein level).

The protein resides in the cytoplasm. The catalysed reaction is D-glyceraldehyde 3-phosphate = dihydroxyacetone phosphate. The enzyme catalyses dihydroxyacetone phosphate = methylglyoxal + phosphate. It functions in the pathway carbohydrate biosynthesis; gluconeogenesis. The protein operates within carbohydrate degradation; glycolysis; D-glyceraldehyde 3-phosphate from glycerone phosphate: step 1/1. Its function is as follows. Triosephosphate isomerase is an extremely efficient metabolic enzyme that catalyzes the interconversion between dihydroxyacetone phosphate (DHAP) and D-glyceraldehyde-3-phosphate (G3P) in glycolysis and gluconeogenesis. It is also responsible for the non-negligible production of methylglyoxal a reactive cytotoxic side-product that modifies and can alter proteins, DNA and lipids. In Procambarus clarkii (Red swamp crayfish), this protein is Triosephosphate isomerase.